A 180-amino-acid chain; its full sequence is uncharacterized protein (180 aa).

This is an uncharacterized protein from Aquifex aeolicus (strain VF5).